A 204-amino-acid chain; its full sequence is Leucyl/phenylalanyl-tRNA--protein transferase (204 aa).

Belongs to the L/F-transferase family.

The protein localises to the cytoplasm. The enzyme catalyses N-terminal L-lysyl-[protein] + L-leucyl-tRNA(Leu) = N-terminal L-leucyl-L-lysyl-[protein] + tRNA(Leu) + H(+). The catalysed reaction is N-terminal L-arginyl-[protein] + L-leucyl-tRNA(Leu) = N-terminal L-leucyl-L-arginyl-[protein] + tRNA(Leu) + H(+). It carries out the reaction L-phenylalanyl-tRNA(Phe) + an N-terminal L-alpha-aminoacyl-[protein] = an N-terminal L-phenylalanyl-L-alpha-aminoacyl-[protein] + tRNA(Phe). Functions in the N-end rule pathway of protein degradation where it conjugates Leu, Phe and, less efficiently, Met from aminoacyl-tRNAs to the N-termini of proteins containing an N-terminal arginine or lysine. This is Leucyl/phenylalanyl-tRNA--protein transferase from Brucella anthropi (strain ATCC 49188 / DSM 6882 / CCUG 24695 / JCM 21032 / LMG 3331 / NBRC 15819 / NCTC 12168 / Alc 37) (Ochrobactrum anthropi).